A 462-amino-acid polypeptide reads, in one-letter code: Metacaspase-1 (462 aa).

A compositionally biased stretch (pro residues) spans M1 to Q21. Positions M1–F150 are disordered. Over residues Q22–Y33 the composition is skewed to low complexity. Pro residues-rich tracts occupy residues P49 to S69 and S77 to P102. Catalysis depends on residues H253 and C309.

The protein belongs to the peptidase C14B family.

Its function is as follows. Involved in cell death (apoptosis). This Coccidioides immitis (strain RS) (Valley fever fungus) protein is Metacaspase-1 (MCA1).